The following is a 427-amino-acid chain: Homeotic protein caudal (427 aa).

Residues 104–273 (QLMQQHHHHH…QPQPGKTRTK (170 aa)) form a disordered region. A compositionally biased stretch (low complexity) spans 116–129 (ASSSSASSGSSSSG). Over residues 145 to 164 (GVGGAGGGGGVGGATDGGPG) the composition is skewed to gly residues. A compositionally biased stretch (polar residues) spans 183 to 195 (ITVSGSEISSPGA). Residues 209-243 (HLSAVANNNNNNNNNNNSPSTHNNNNNNNSVSNNN) are compositionally biased toward low complexity. Position 245 is a phosphothreonine (Thr-245). The short motif at 252–257 (YFDWMK) is the Antp-type hexapeptide element. The homeobox DNA-binding region spans 273 to 332 (KDKYRVVYTDFQRLELEKEYCTSRYITIRRKSELAQTLSLSERQVKIWFQNRRAKERKQN).

The protein belongs to the Caudal homeobox family. Maternally localized in an anteroposterior gradient in the syncytial blastoderm. Also expressed in the pole cells. Zygotically localized in the primordia of the terminal abdominal segment, the hindgut and in the posterior midgut rudiment. Expressed in the gut, the gonads and parts of the genital disks of third instar larvae (at protein level).

Its subcellular location is the nucleus. Its function is as follows. Caudal (cad) is one of a number of transcription factors controlling segmentation of the embryo. Further transcriptional regulation via a 5' flanking region containing DNA replication-related elements (DRE) and by dref also regulated by trh and tgo via the CNS midline element. Alongside Bicoid (bcd), caudal forms concentration gradients down the anterior-posterior (A-P) axis providing positional information and subsequent induction of the gap genes. Plays a role in gastrulation/germ band extension, hindgut morphogenesis, positive regulation of cell proliferation, genital disk development and pattern formation. Acts as a key regulator of the Hox gene network and activates transcription via the downstream core promoter element (DPE) relative to the TATA box. Plays a role in the establishment of the hindgut and in the invagination of the hindgut primordium during gastrulation. These effects on the gut are achieved by acting combinatorially at the posterior of the embryo to activate transcription of different targets including fog, fkh and wg. Caudal is involved in regulation of proliferation through transactivation of the E2F gene. Postembryonically its function is mostly restricted to the intestine where it regulates antimicrobial peptide (AMP) levels preserving the normal gut flora. In Drosophila melanogaster (Fruit fly), this protein is Homeotic protein caudal (cad).